A 433-amino-acid polypeptide reads, in one-letter code: MAIQTTTGLAARLVAKRATFPASRRNFSASRSALKEIQEAYILSGARTPTAKFNGSFVSVSAPELGAVAIKSAVSKSGVPVEKITDVYMGNVLQGAVGQAPARQASMFAGLSPTVESMTVNKVCASGLKAVALAAQNIQLGLAEAQVAGGMENMSRVPYYLPRSTQLPPFGEIKLQDGLIQDGLWDVYNQFHMGICAEKTAKKYEISREEQDQYAIQSYQRAQAAWKENKFAEEIAPVTVKGKKGETVVERDEGYENLRIDKMATLKPAFLRDGTGTVTAGNASTMNDGASALVLGSKAIAREFAQGNRALARIVSTADAAIDPVDFPVAPAKAVPIALERAGITKDQVAVWEFNEAFAAVIKANEKILGLQNARVNPLGGAISLGHALGSSGSRILVTLLHQLQPGEYGVAAICNGGGAATAMVVQKLDRVD.

A mitochondrion-targeting transit peptide spans 1 to 34 (MAIQTTTGLAARLVAKRATFPASRRNFSASRSAL). Cysteine 124 (acyl-thioester intermediate) is an active-site residue. Residue tyrosine 219 participates in K(+) binding. Residues asparagine 229 and lysine 262 each contribute to the CoA site. Alanine 280 is a K(+) binding site. Serine 284 provides a ligand contact to CoA. Catalysis depends on proton acceptor residues histidine 387 and cysteine 415. Asparagine 416 contacts chloride.

The protein belongs to the thiolase-like superfamily. Thiolase family. As to quaternary structure, homotetramer. It depends on K(+) as a cofactor.

Its subcellular location is the mitochondrion. The enzyme catalyses 2 acetyl-CoA = acetoacetyl-CoA + CoA. Its pathway is metabolic intermediate biosynthesis; (R)-mevalonate biosynthesis; (R)-mevalonate from acetyl-CoA: step 1/3. Its function is as follows. Mitochondrial acetyl-CoA acetyltransferase that catalyzes both the formation and degradation of acetoacetyl-CoA. Has no overlapping function with erg10B and seems not to be involved in ergosterol biosynthesis. Plays an important role in growth, morphogenesis and maintaining mitochondrial function including the response to oxidative stresses. This chain is Acetyl-CoA acetyltransferase erg10A, mitochondrial, found in Aspergillus fumigatus (strain ATCC MYA-4609 / CBS 101355 / FGSC A1100 / Af293) (Neosartorya fumigata).